A 197-amino-acid chain; its full sequence is Probable proteasome subunit beta type-4 (197 aa).

Belongs to the peptidase T1B family. In terms of assembly, the 26S proteasome consists of a 20S proteasome core and two 19S regulatory subunits. The 20S proteasome core is composed of 28 subunits that are arranged in four stacked rings, resulting in a barrel-shaped structure. The two end rings are each formed by seven alpha subunits, and the two central rings are each formed by seven beta subunits. The catalytic chamber with the active sites is on the inside of the barrel.

It localises to the cytoplasm. Its subcellular location is the nucleus. Non-catalytic component of the proteasome which degrades poly-ubiquitinated proteins in the cytoplasm and in the nucleus. It is essential for the regulated turnover of proteins and for the removal of misfolded proteins. The proteasome is a multicatalytic proteinase complex that is characterized by its ability to cleave peptides with Arg, Phe, Tyr, Leu, and Glu adjacent to the leaving group at neutral or slightly basic pH. It has an ATP-dependent proteolytic activity. The chain is Probable proteasome subunit beta type-4 (PRE1) from Encephalitozoon cuniculi (strain GB-M1) (Microsporidian parasite).